The sequence spans 168 residues: Putative insulin-like growth factor 2 antisense gene protein (168 aa).

2 disordered regions span residues 1-91 and 108-168; these read MSKR…ERSN and PLRR…RPGK. 2 stretches are compositionally biased toward basic residues: residues 59–70 and 159–168; these read AQRRRGSARRGA and RWRQPGRPGK.

This chain is Putative insulin-like growth factor 2 antisense gene protein (IGF2-AS), found in Homo sapiens (Human).